The following is a 351-amino-acid chain: Cyanuric acid amidohydrolase (351 aa).

The interval 1–96 (MPSLRAHVFR…HWTVFARETV (96 aa)) is RU A. Substrate contacts are provided by residues R53 and 77–78 (SG). Residues 103–240 (ALAIGVSRTP…HEIIVLGMSA (138 aa)) form an RU B region. K153 is a catalytic residue. Substrate contacts are provided by residues R185 and 223 to 224 (SS). S223 serves as the catalytic Nucleophile. An RU C region spans residues 246 to 351 (LSIDHAVMLD…PVAIIVEKEQ (106 aa)). E283 is a binding site for Mg(2+). Substrate is bound by residues R310 and 329 to 330 (SG). Residues A332, Q335, G336, P337, and G340 each contribute to the Mg(2+) site.

It belongs to the cyclic amide hydrolase (CyAH) family. In terms of assembly, homotetramer.

The catalysed reaction is cyanurate + H2O = 1-carboxybiuret + H(+). It functions in the pathway xenobiotic degradation; atrazine degradation; biuret from cyanurate: step 1/1. With respect to regulation, inhibited by barbituric acid. In terms of biological role, responsible for the hydrolysis of cyanuric acid, an intermediate formed during catabolism of s-triazine based compounds in herbicides such as atrazine and polymers such as melamine. Catalyzes the hydrolytic opening of the s-triazine ring of cyanuric acid (2,4,6-trihydroxy-s-triazine) to yield carbon dioxide and carboxybiuret, which spontaneously decarboxylates to biuret. This chain is Cyanuric acid amidohydrolase, found in Rhizobium leguminosarum bv. trifolii (strain WSM1325).